A 97-amino-acid chain; its full sequence is Protein Vpr (97 aa).

Residues 1–42 (MEQAPEDQGPQREPYNEWTLELLEELKREAVRHFPRPWLHSL) are homooligomerization. Ser-79, Ser-95, and Ser-97 each carry phosphoserine; by host.

It belongs to the HIV-1 VPR protein family. As to quaternary structure, homooligomer, may form homodimer. Interacts with p6-gag region of the Pr55 Gag precursor protein through a (Leu-X-X)4 motif near the C-terminus of the P6gag protein. Interacts with host UNG. May interact with host RAD23A/HHR23A. Interacts with host VPRBP/DCAF1, leading to hijack the CUL4A-RBX1-DDB1-DCAF1/VPRBP complex, mediating ubiquitination of host proteins such as TERT and ZGPAT and arrest of the cell cycle in G2 phase. In terms of processing, phosphorylated on several residues by host. These phosphorylations regulate VPR activity for the nuclear import of the HIV-1 pre-integration complex.

The protein resides in the virion. It localises to the host nucleus. It is found in the host extracellular space. During virus replication, may deplete host UNG protein, and incude G2-M cell cycle arrest. Acts by targeting specific host proteins for degradation by the 26S proteasome, through association with the cellular CUL4A-DDB1 E3 ligase complex by direct interaction with host VPRPB/DCAF-1. Cell cycle arrest reportedly occurs within hours of infection and is not blocked by antiviral agents, suggesting that it is initiated by the VPR carried into the virion. Additionally, VPR induces apoptosis in a cell cycle dependent manner suggesting that these two effects are mechanistically linked. Detected in the serum and cerebrospinal fluid of AIDS patient, VPR may also induce cell death to bystander cells. In terms of biological role, during virus entry, plays a role in the transport of the viral pre-integration (PIC) complex to the host nucleus. This function is crucial for viral infection of non-dividing macrophages. May act directly at the nuclear pore complex, by binding nucleoporins phenylalanine-glycine (FG)-repeat regions. In Human immunodeficiency virus type 1 group M subtype B (isolate ARV2/SF2) (HIV-1), this protein is Protein Vpr.